A 417-amino-acid polypeptide reads, in one-letter code: Protein translocase subunit SecD (417 aa).

Helical transmembrane passes span 9–29, 236–256, 258–278, 288–308, 333–353, and 360–380; these read LLVSVLAIVIAFAVFIKPLVS, ASMKAFAIGLAGVFLFMLLYY, LSGLVADIVLLLYTLLLLAVM, PGMAGIILSIGMAVDANVLIF, FTTILDSNVTTLMAAAVLFYL, and GFAVTLALGVLISMFTAVTVT.

Belongs to the SecD/SecF family. SecD subfamily. As to quaternary structure, forms a complex with SecF. Part of the essential Sec protein translocation apparatus which comprises SecA, SecYEG and auxiliary proteins SecDF. Other proteins may also be involved.

It localises to the cell membrane. Its function is as follows. Part of the Sec protein translocase complex. Interacts with the SecYEG preprotein conducting channel. SecDF uses the proton motive force (PMF) to complete protein translocation after the ATP-dependent function of SecA. This Acidaminococcus fermentans (strain ATCC 25085 / DSM 20731 / CCUG 9996 / CIP 106432 / VR4) protein is Protein translocase subunit SecD.